Here is a 395-residue protein sequence, read N- to C-terminus: Zinc-regulated GTPase metalloprotein activator 1E (395 aa).

Residues 1 to 22 (MLPAVGSVDEEEDPAEEDCPEL) are disordered. Positions 8–20 (VDEEEDPAEEDCP) are enriched in acidic residues. Positions 17–24 (EDCPELVP) match the psi-PxLVp motif motif. Residue 49 to 56 (GYLGAGKT) coordinates GTP. Zn(2+) contacts are provided by Cys-107, Cys-109, and Cys-110. Positions 107–110 (CLCC) match the CXCC motif motif. GTP contacts are provided by residues 110–114 (CSVKD) and 203–206 (NKTD). Positions 274-377 (IVTITFEVPG…ILKQLFIATV (104 aa)) constitute a CobW C-terminal domain.

This sequence belongs to the SIMIBI class G3E GTPase family. ZNG1 subfamily.

It localises to the nucleus. The enzyme catalyses GTP + H2O = GDP + phosphate + H(+). Its function is as follows. Zinc chaperone that directly transfers zinc cofactor to target metalloproteins, thereby activating them. Catalyzes zinc insertion into the active site of methionine aminopeptidase METAP1, which function to cleave the initiator methionine from polypeptides during or after protein translation. Mechanistically, the N-terminal psi-PxLVp motif binds to the C6H2-type zinc finger of inactive form of METAP1. After formation of the docked complex, zinc is transferred from the CXCC motif in the GTPase domain of ZNG1E to the zinc binding site in the peptidase domain of METAP1 in a process requiring GTP hydrolysis. GTP/GDP exchange is required for release of active METAP1. This Homo sapiens (Human) protein is Zinc-regulated GTPase metalloprotein activator 1E.